The chain runs to 129 residues: Gem-associated protein 7 (129 aa).

M1 bears the N-acetylmethionine mark. In terms of domain architecture, SUZ-C spans 1–31 (MQSPLTIPVPVPVLRLPRGPDGFSRGFASDG). Residues 63-129 (RYLRSLLAMV…SDIISYSFKL (67 aa)) enclose the Sm domain.

It belongs to the gemin-7 family. Part of the core SMN complex that contains SMN1, GEMIN2/SIP1, DDX20/GEMIN3, GEMIN4, GEMIN5, GEMIN6, GEMIN7, GEMIN8 and STRAP/UNRIP. Part of the SMN-Sm complex that contains SMN1, GEMIN2/SIP1, DDX20/GEMIN3, GEMIN4, GEMIN5, GEMIN6, GEMIN7, GEMIN8, STRAP/UNRIP and the Sm proteins SNRPB, SNRPD1, SNRPD2, SNRPD3, SNRPE, SNRPF and SNRPG. Interacts with GEMIN6; the interaction is direct. Interacts with STRAP/UNRIP; the interaction is direct. Interacts with GEMIN8; the interaction is direct. Interacts with SNRPB, SNRPD2, SNRPD3 and SNRPE; the interaction is direct.

The protein resides in the nucleus. Its subcellular location is the nucleoplasm. The protein localises to the gem. It localises to the cytoplasm. In terms of biological role, the SMN complex catalyzes the assembly of small nuclear ribonucleoproteins (snRNPs), the building blocks of the spliceosome, and thereby plays an important role in the splicing of cellular pre-mRNAs. Most spliceosomal snRNPs contain a common set of Sm proteins SNRPB, SNRPD1, SNRPD2, SNRPD3, SNRPE, SNRPF and SNRPG that assemble in a heptameric protein ring on the Sm site of the small nuclear RNA to form the core snRNP (Sm core). In the cytosol, the Sm proteins SNRPD1, SNRPD2, SNRPE, SNRPF and SNRPG are trapped in an inactive 6S pICln-Sm complex by the chaperone CLNS1A that controls the assembly of the core snRNP. To assemble core snRNPs, the SMN complex accepts the trapped 5Sm proteins from CLNS1A forming an intermediate. Binding of snRNA inside 5Sm triggers eviction of the SMN complex, thereby allowing binding of SNRPD3 and SNRPB to complete assembly of the core snRNP. The polypeptide is Gem-associated protein 7 (Gemin7) (Mus musculus (Mouse)).